The chain runs to 403 residues: Argininosuccinate synthase (403 aa).

9–17 (AYSGGLDTS) serves as a coordination point for ATP. Tyr86 contributes to the L-citrulline binding site. Gly116 is a binding site for ATP. Positions 118, 122, and 123 each coordinate L-aspartate. Asn122 serves as a coordination point for L-citrulline. Positions 126, 174, 183, 259, and 271 each coordinate L-citrulline.

The protein belongs to the argininosuccinate synthase family. Type 1 subfamily. In terms of assembly, homotetramer.

The protein localises to the cytoplasm. It carries out the reaction L-citrulline + L-aspartate + ATP = 2-(N(omega)-L-arginino)succinate + AMP + diphosphate + H(+). Its pathway is amino-acid biosynthesis; L-arginine biosynthesis; L-arginine from L-ornithine and carbamoyl phosphate: step 2/3. This Shouchella clausii (strain KSM-K16) (Alkalihalobacillus clausii) protein is Argininosuccinate synthase.